Here is a 199-residue protein sequence, read N- to C-terminus: Elongation factor Ts (199 aa).

The interval 80–83 (TDFV) is involved in Mg(2+) ion dislocation from EF-Tu.

It belongs to the EF-Ts family.

The protein resides in the cytoplasm. In terms of biological role, associates with the EF-Tu.GDP complex and induces the exchange of GDP to GTP. It remains bound to the aminoacyl-tRNA.EF-Tu.GTP complex up to the GTP hydrolysis stage on the ribosome. This is Elongation factor Ts from Thermodesulfovibrio yellowstonii (strain ATCC 51303 / DSM 11347 / YP87).